Reading from the N-terminus, the 68-residue chain is Inhibitor of trypsin and hageman factor (68 aa).

Ser-1 carries the post-translational modification N-acetylserine. Cysteines 3 and 48 form a disulfide.

It belongs to the protease inhibitor I13 (potato type I serine protease inhibitor) family.

Specifically inhibits both trypsin and activated Hageman factor. This chain is Inhibitor of trypsin and hageman factor, found in Cucurbita maxima (Pumpkin).